Reading from the N-terminus, the 253-residue chain is Electron transfer flavoprotein subunit beta, mitochondrial (253 aa).

Belongs to the ETF beta-subunit/FixA family. Heterodimer of an alpha and a beta subunit. Requires FAD as cofactor. AMP is required as a cofactor.

It is found in the mitochondrion matrix. Its function is as follows. The electron transfer flavoprotein serves as a specific electron acceptor for several dehydrogenases, including five acyl-CoA dehydrogenases, glutaryl-CoA and sarcosine dehydrogenase. It transfers the electrons to the main mitochondrial respiratory chain via ETF-ubiquinone oxidoreductase (ETF dehydrogenase). This chain is Electron transfer flavoprotein subunit beta, mitochondrial (ETFB), found in Oryza sativa subsp. indica (Rice).